The chain runs to 156 residues: Small ribosomal subunit protein uS7 (156 aa).

The protein belongs to the universal ribosomal protein uS7 family. As to quaternary structure, part of the 30S ribosomal subunit. Contacts proteins S9 and S11.

Its function is as follows. One of the primary rRNA binding proteins, it binds directly to 16S rRNA where it nucleates assembly of the head domain of the 30S subunit. Is located at the subunit interface close to the decoding center, probably blocks exit of the E-site tRNA. This Streptococcus pyogenes serotype M12 (strain MGAS2096) protein is Small ribosomal subunit protein uS7.